The primary structure comprises 122 residues: Small ribosomal subunit protein uS13 (122 aa).

Residues 95–122 (GLPVRGQRTHTNARTRKGPAKPIAGKKK) form a disordered region.

This sequence belongs to the universal ribosomal protein uS13 family. In terms of assembly, part of the 30S ribosomal subunit. Forms a loose heterodimer with protein S19. Forms two bridges to the 50S subunit in the 70S ribosome.

Its function is as follows. Located at the top of the head of the 30S subunit, it contacts several helices of the 16S rRNA. In the 70S ribosome it contacts the 23S rRNA (bridge B1a) and protein L5 of the 50S subunit (bridge B1b), connecting the 2 subunits; these bridges are implicated in subunit movement. Contacts the tRNAs in the A and P-sites. The sequence is that of Small ribosomal subunit protein uS13 from Rhodospirillum rubrum (strain ATCC 11170 / ATH 1.1.1 / DSM 467 / LMG 4362 / NCIMB 8255 / S1).